A 162-amino-acid polypeptide reads, in one-letter code: Probable chemoreceptor glutamine deamidase CheD 2 (162 aa).

It belongs to the CheD family.

The enzyme catalyses L-glutaminyl-[protein] + H2O = L-glutamyl-[protein] + NH4(+). Its function is as follows. Probably deamidates glutamine residues to glutamate on methyl-accepting chemotaxis receptors (MCPs), playing an important role in chemotaxis. This chain is Probable chemoreceptor glutamine deamidase CheD 2, found in Geobacter metallireducens (strain ATCC 53774 / DSM 7210 / GS-15).